Reading from the N-terminus, the 258-residue chain is Phosphate import ATP-binding protein PstB (258 aa).

In terms of domain architecture, ABC transporter spans Leu5–Lys247. Gly37 to Thr44 is a binding site for ATP.

This sequence belongs to the ABC transporter superfamily. Phosphate importer (TC 3.A.1.7) family. The complex is composed of two ATP-binding proteins (PstB), two transmembrane proteins (PstC and PstA) and a solute-binding protein (PstS).

It localises to the cell membrane. It carries out the reaction phosphate(out) + ATP + H2O = ADP + 2 phosphate(in) + H(+). In terms of biological role, part of the ABC transporter complex PstSACB involved in phosphate import. Responsible for energy coupling to the transport system. The sequence is that of Phosphate import ATP-binding protein PstB from Mycolicibacterium paratuberculosis (strain ATCC BAA-968 / K-10) (Mycobacterium paratuberculosis).